Reading from the N-terminus, the 1575-residue chain is Lysophospholipase NTE1 (1575 aa).

Residues 1-56 (MNLTTTMPAAVAPDPPAQLAVSSRSLSDSSDAAGASRTSSSCRASSPSHCPTHAWN) form a disordered region. The Cytoplasmic segment spans residues 1–99 (MNLTTTMPAA…TLSPPNLLQG (99 aa)). Residues 19 to 48 (LAVSSRSLSDSSDAAGASRTSSSCRASSPS) show a composition bias toward low complexity. Residues 100 to 120 (IVSQLAMASYIGRLLLYLFQV) form a helical membrane-spanning segment. At 121 to 151 (VPSLLYWAITFTTITVPTALFTLFSMSLTFT) the chain is on the lumenal side. The helical transmembrane segment at 152–172 (MNFTTLLIIVLLLVSTVSWFI) threads the bilayer. Topologically, residues 173-1575 (RYRFLNIYSR…RTMAPRRASI (1403 aa)) are cytoplasmic. 2 disordered regions span residues 339–425 (DMES…AKSV) and 568–587 (GSAS…VSPG). Basic residues predominate over residues 409 to 424 (RGHRRKRPSRPKRAKS). A nucleoside 3',5'-cyclic phosphate-binding positions include 737–856 (GGTS…TSYR) and 894–1014 (RLTT…IAQR). A PNPLA domain is found at 1272–1436 (LVLGGGGARG…VDNLTVARMK (165 aa)). Positions 1276-1281 (GGGARG) match the GXGXXG motif. Residues 1303–1307 (GTSIG) carry the GXSXG motif. Catalysis depends on Ser-1305, which acts as the Nucleophile. Residue Asp-1423 is the Proton acceptor of the active site. A DGA/G motif is present at residues 1423–1425 (DGG).

The protein belongs to the NTE family.

Its subcellular location is the endoplasmic reticulum membrane. It carries out the reaction a 1-acyl-sn-glycero-3-phosphocholine + H2O = sn-glycerol 3-phosphocholine + a fatty acid + H(+). Inhibited by organophosphorus esters. Intracellular phospholipase B that catalyzes the double deacylation of phosphatidylcholine (PC) to glycerophosphocholine (GroPCho). Plays an important role in membrane lipid homeostasis. Responsible for the rapid PC turnover in response to inositol, elevated temperatures, or when choline is present in the growth medium. This Coccidioides immitis (strain RS) (Valley fever fungus) protein is Lysophospholipase NTE1 (NTE1).